The primary structure comprises 110 residues: UPF0122 protein SP70585_1353 (110 aa).

This sequence belongs to the UPF0122 family.

Might take part in the signal recognition particle (SRP) pathway. This is inferred from the conservation of its genetic proximity to ftsY/ffh. May be a regulatory protein. This chain is UPF0122 protein SP70585_1353, found in Streptococcus pneumoniae (strain 70585).